A 390-amino-acid polypeptide reads, in one-letter code: Heme chaperone HemW (390 aa).

Positions 15 to 254 (PMPGQPFGVY…DARLSAAGFA (240 aa)) constitute a Radical SAM core domain. Tyr-24 is an S-adenosyl-L-methionine binding site. [4Fe-4S] cluster-binding residues include Cys-30, Cys-34, and Cys-37. S-adenosyl-L-methionine contacts are provided by residues Gly-82, 83-84 (GT), Glu-115, Gln-142, Arg-154, and Asp-179.

This sequence belongs to the anaerobic coproporphyrinogen-III oxidase family. HemW subfamily. It depends on [4Fe-4S] cluster as a cofactor.

The protein resides in the cytoplasm. In terms of biological role, probably acts as a heme chaperone, transferring heme to an unknown acceptor. Binds one molecule of heme per monomer, possibly covalently. Binds 1 [4Fe-4S] cluster. The cluster is coordinated with 3 cysteines and an exchangeable S-adenosyl-L-methionine. This is Heme chaperone HemW from Mycobacterium tuberculosis (strain CDC 1551 / Oshkosh).